Here is an 89-residue protein sequence, read N- to C-terminus: Small ribosomal subunit protein uS14 (89 aa).

The protein belongs to the universal ribosomal protein uS14 family. As to quaternary structure, part of the 30S ribosomal subunit. Contacts proteins S3 and S10.

Functionally, binds 16S rRNA, required for the assembly of 30S particles and may also be responsible for determining the conformation of the 16S rRNA at the A site. This is Small ribosomal subunit protein uS14 from Exiguobacterium sibiricum (strain DSM 17290 / CCUG 55495 / CIP 109462 / JCM 13490 / 255-15).